Consider the following 353-residue polypeptide: Dihydroorotate dehydrogenase (quinone) (353 aa).

Residues 66 to 70 and Thr90 each bind FMN; that span reads AGFDK. Substrate is bound at residue Lys70. Residue 115–119 coordinates substrate; it reads NRMGF. 2 residues coordinate FMN: Asn143 and Asn176. Asn176 serves as a coordination point for substrate. The Nucleophile role is filled by Ser179. Asn181 is a binding site for substrate. Positions 212 and 240 each coordinate FMN. 241–242 serves as a coordination point for substrate; sequence NT. Residues Gly264, Gly293, and 314-315 contribute to the FMN site; that span reads YT.

This sequence belongs to the dihydroorotate dehydrogenase family. Type 2 subfamily. Monomer. Requires FMN as cofactor.

The protein resides in the cell membrane. It catalyses the reaction (S)-dihydroorotate + a quinone = orotate + a quinol. Its pathway is pyrimidine metabolism; UMP biosynthesis via de novo pathway; orotate from (S)-dihydroorotate (quinone route): step 1/1. Its function is as follows. Catalyzes the conversion of dihydroorotate to orotate with quinone as electron acceptor. This chain is Dihydroorotate dehydrogenase (quinone), found in Mycolicibacterium vanbaalenii (strain DSM 7251 / JCM 13017 / BCRC 16820 / KCTC 9966 / NRRL B-24157 / PYR-1) (Mycobacterium vanbaalenii).